Here is a 395-residue protein sequence, read N- to C-terminus: MAQLETRTEPMVVNFGPHHPSMHGVLRLVVTLDGENVIDCEPVIGYLHRGMEKIAENRTNVMYVPYVSRMDYAAGMFYEAIVVNAPERLANIPVPKRASYIRVLMLELNRIANHLLWLGPFLADVGAQTPFFYIFREREMIYDLWEAATGQRLINNNFFRIGGVACDLPYGWLEKCIDFCDWFGPKIDEYEKLITNNPIFRKRIEGLGTIQRDQAINWSLSGPMLRASGVSWDLRKVDSYECYDDFDWQIASEKEGDCYARYRVRVEEMRQSLSIIRQACKMIPGGPTENLEAQRMSTEDKKSEIFGIDYQYVAKKVAPTFKIPNGELYTRLESGKGEIGVFIQGNNEVTPWRFKIRAADLNNLQILPHILKGAKIADIMAILGSIDVIMGSVDR.

This sequence belongs to the complex I 49 kDa subunit family. As to quaternary structure, NDH-1 can be composed of about 15 different subunits; different subcomplexes with different compositions have been identified which probably have different functions.

Its subcellular location is the cellular thylakoid membrane. It catalyses the reaction a plastoquinone + NADH + (n+1) H(+)(in) = a plastoquinol + NAD(+) + n H(+)(out). The catalysed reaction is a plastoquinone + NADPH + (n+1) H(+)(in) = a plastoquinol + NADP(+) + n H(+)(out). NDH-1 shuttles electrons from an unknown electron donor, via FMN and iron-sulfur (Fe-S) centers, to quinones in the respiratory and/or the photosynthetic chain. The immediate electron acceptor for the enzyme in this species is believed to be plastoquinone. Couples the redox reaction to proton translocation, and thus conserves the redox energy in a proton gradient. Cyanobacterial NDH-1 also plays a role in inorganic carbon-concentration. This Prochlorococcus marinus (strain MIT 9301) protein is NAD(P)H-quinone oxidoreductase subunit H.